A 204-amino-acid chain; its full sequence is Ribonuclease HII (204 aa).

The RNase H type-2 domain occupies 8-197 (RLICGVDEAG…VRELLQNPPL (190 aa)). The a divalent metal cation site is built by Asp-14, Glu-15, and Asp-106.

Belongs to the RNase HII family. It depends on Mn(2+) as a cofactor. The cofactor is Mg(2+).

Its subcellular location is the cytoplasm. It carries out the reaction Endonucleolytic cleavage to 5'-phosphomonoester.. In terms of biological role, endonuclease that specifically degrades the RNA of RNA-DNA hybrids. In Azoarcus sp. (strain BH72), this protein is Ribonuclease HII.